The primary structure comprises 247 residues: Large ribosomal subunit protein uL3 (247 aa).

2 disordered regions span residues 140–164 (SHRSIGSTGGRQDPGKTFKNKKMPG) and 212–247 (LPKEAPKPGKFKVVGDAQAVDEDKAPADTPAEKEGA). An N5-methylglutamine modification is found at Gln151. The segment covering 232–247 (DEDKAPADTPAEKEGA) has biased composition (basic and acidic residues).

The protein belongs to the universal ribosomal protein uL3 family. In terms of assembly, part of the 50S ribosomal subunit. Forms a cluster with proteins L14 and L19. In terms of processing, methylated by PrmB.

One of the primary rRNA binding proteins, it binds directly near the 3'-end of the 23S rRNA, where it nucleates assembly of the 50S subunit. This Nitrobacter winogradskyi (strain ATCC 25391 / DSM 10237 / CIP 104748 / NCIMB 11846 / Nb-255) protein is Large ribosomal subunit protein uL3.